Consider the following 232-residue polypeptide: MKKLLVASSASAALFAVGVGANAHAAEDNNVNQDQLAQTALNNTQQLNDAPVQEGAYNIAFDNSGYNFNFNSDGTNWSWSYNADSSAQQAPAQSTTQEQAPAAQQAPAQSTTQEQAPAAQQAPAQEQTQQPAQQPAQQQTQQPAQQSADSGSNVQVNDHLKAIAQRESGGDIHAINSSSGAAGKYQFLQTTWDSVAPAEYQGKPASEAPEAVQDAAAQKLYDTAGPSQWVTA.

A signal peptide spans 1-25; the sequence is MKKLLVASSASAALFAVGVGANAHA. A disordered region spans residues 84-154; it reads DSSAQQAPAQ…QQSADSGSNV (71 aa). Residues 87–148 are compositionally biased toward low complexity; sequence AQQAPAQSTT…QTQQPAQQSA (62 aa).

It belongs to the transglycosylase family. SceD subfamily.

It localises to the secreted. Functionally, is able to cleave peptidoglycan and affects clumping and separation of bacterial cells. This Staphylococcus carnosus (strain TM300) protein is Probable transglycosylase SceD (sceD).